The chain runs to 258 residues: Isoprenyl transferase (258 aa).

Residue Asp24 is part of the active site. Asp24 contributes to the Mg(2+) binding site. Substrate-binding positions include 25–28 (GNGR), Trp29, Arg37, His41, and 69–71 (SSE). The active-site Proton acceptor is the Asn72. Substrate-binding positions include Trp73, Arg75, Arg190, and 196–198 (RIS). Mg(2+) is bound at residue Glu209.

This sequence belongs to the UPP synthase family. Homodimer. Requires Mg(2+) as cofactor.

Its function is as follows. Catalyzes the condensation of isopentenyl diphosphate (IPP) with allylic pyrophosphates generating different type of terpenoids. In Ralstonia nicotianae (strain ATCC BAA-1114 / GMI1000) (Ralstonia solanacearum), this protein is Isoprenyl transferase.